Here is a 199-residue protein sequence, read N- to C-terminus: Extracellular superoxide dismutase [Cu-Zn] (199 aa).

The N-terminal stretch at 1–20 is a signal peptide; the sequence is MMIASFAIFLSHIIFITYAT. N-linked (GlcNAc...) asparagine glycans are attached at residues asparagine 33, asparagine 60, and asparagine 70. Cu cation is bound by residues histidine 89, histidine 91, and histidine 106. Cysteine 100 and cysteine 192 form a disulfide bridge. A Zn(2+)-binding site is contributed by histidine 106. Asparagine 111 carries an N-linked (GlcNAc...) asparagine glycan. Positions 114, 123, and 126 each coordinate Zn(2+). Histidine 163 is a binding site for Cu cation.

Belongs to the Cu-Zn superoxide dismutase family. In terms of assembly, homodimer. It depends on Cu cation as a cofactor. Requires Zn(2+) as cofactor.

It is found in the secreted. The protein localises to the extracellular space. The enzyme catalyses 2 superoxide + 2 H(+) = H2O2 + O2. In terms of biological role, protect the extracellular space from toxic effect of reactive oxygen intermediates by converting superoxide radicals into hydrogen peroxide and oxygen. May act in the parasite defense by neutralizing superoxide generated by activated leukocytes, thus acting as both an antioxidant and an anti-inflammatory factor. In Brugia pahangi (Filarial nematode worm), this protein is Extracellular superoxide dismutase [Cu-Zn].